Here is a 96-residue protein sequence, read N- to C-terminus: Seed trypsin/chymotrypsin inhibitor IVA (96 aa).

An N-terminal signal peptide occupies residues 1 to 10 (LSFAANVVNA). The propeptide occupies 11–24 (RFDSTSFITQVLSN). Cystine bridges form between cysteine 32–cysteine 85, cysteine 33–cysteine 48, cysteine 36–cysteine 81, cysteine 38–cysteine 46, cysteine 55–cysteine 62, cysteine 59–cysteine 74, and cysteine 64–cysteine 72. Positions 88-96 (SEVEEVIKN) are cleaved as a propeptide — removed in PSTI I.

Belongs to the Bowman-Birk serine protease inhibitor family. In terms of tissue distribution, seed.

Inhibitor of trypsin and of chymotrypsin. May function as a natural phytochemical defense against predators. The sequence is that of Seed trypsin/chymotrypsin inhibitor IVA (TI1236) from Pisum sativum (Garden pea).